The sequence spans 225 residues: NAD(P)H-quinone oxidoreductase subunit K, chloroplastic (225 aa).

[4Fe-4S] cluster is bound by residues Cys-43, Cys-44, Cys-108, and Cys-139.

It belongs to the complex I 20 kDa subunit family. As to quaternary structure, NDH is composed of at least 16 different subunits, 5 of which are encoded in the nucleus. [4Fe-4S] cluster serves as cofactor.

It localises to the plastid. It is found in the chloroplast thylakoid membrane. It catalyses the reaction a plastoquinone + NADH + (n+1) H(+)(in) = a plastoquinol + NAD(+) + n H(+)(out). The catalysed reaction is a plastoquinone + NADPH + (n+1) H(+)(in) = a plastoquinol + NADP(+) + n H(+)(out). In terms of biological role, NDH shuttles electrons from NAD(P)H:plastoquinone, via FMN and iron-sulfur (Fe-S) centers, to quinones in the photosynthetic chain and possibly in a chloroplast respiratory chain. The immediate electron acceptor for the enzyme in this species is believed to be plastoquinone. Couples the redox reaction to proton translocation, and thus conserves the redox energy in a proton gradient. In Brachypodium distachyon (Purple false brome), this protein is NAD(P)H-quinone oxidoreductase subunit K, chloroplastic.